The sequence spans 780 residues: Myosin heavy chain kinase C (780 aa).

The 204-residue stretch at 40-243 (IGDDLKPKWT…VCDFLKLKPI (204 aa)) folds into the Alpha-type protein kinase domain. Residues 310–495 (RIRAQQQQKS…MEQTPDRSEF (186 aa)) are disordered. Positions 337 to 350 (QQSPSSPTSKPVPQ) are enriched in low complexity. The span at 353–376 (KTPSQSNVVNKSPVSPPKENSNVK) shows a compositional bias: polar residues. The span at 380–436 (DNINNNNSSISSNNDNSNNNNNNNDNINNSSNSSSVNSNSSSVSSSSSSSSSSSSSS) shows a compositional bias: low complexity. The segment covering 437–450 (TTNAAPISIQVSRN) has biased composition (polar residues). The segment covering 458–488 (IQPSSAAASASSTSSSNVPTPESTSTSSMEQ) has biased composition (low complexity). WD repeat units lie at residues 507-546 (DTVR…HVTN), 549-589 (AHGK…TIKE), 591-628 (KESN…CVKT), 631-668 (GHTR…ILTN), 671-708 (GHEG…CVNT), and 748-780 (NTRS…WDKM).

It belongs to the protein kinase superfamily. Alpha-type protein kinase family. ALPK subfamily. In terms of assembly, interacts with myosin II heavy chain (mhcA). Autophosphorylated in vitro.

Its subcellular location is the cytoplasm. It is found in the cell cortex. It localises to the membrane. The protein localises to the cleavage furrow. The catalysed reaction is L-threonyl-[myosin heavy-chain] + ATP = O-phospho-L-threonyl-[myosin heavy-chain] + ADP + H(+). Phosphorylates threonine at 'Thr-1823', 'Thr-1833' and 'Thr-2029' in the C-terminal tail region of myosin II heavy chain (mhcA). This phosphorylation is critical in actin-activated ATPase activity of the myosin and regulating the assembly and disassembly of myosin II filament. In vitro, catalytic domain phosphorylates mhcA, myelin basic protein, myosin regulatory light chain, casein and caldesmon. Drives the disassembly of myosin II filaments for efficient cytokinesis and recycling of myosin II that occurs during late cytokinesis. Can be activated in vitro by autophosphorylation. This is Myosin heavy chain kinase C (mhkC) from Dictyostelium discoideum (Social amoeba).